The chain runs to 151 residues: 3-hydroxyacyl-[acyl-carrier-protein] dehydratase FabZ (151 aa).

His-57 is a catalytic residue.

It belongs to the thioester dehydratase family. FabZ subfamily.

It localises to the cytoplasm. It catalyses the reaction a (3R)-hydroxyacyl-[ACP] = a (2E)-enoyl-[ACP] + H2O. Its function is as follows. Involved in unsaturated fatty acids biosynthesis. Catalyzes the dehydration of short chain beta-hydroxyacyl-ACPs and long chain saturated and unsaturated beta-hydroxyacyl-ACPs. This chain is 3-hydroxyacyl-[acyl-carrier-protein] dehydratase FabZ, found in Tolumonas auensis (strain DSM 9187 / NBRC 110442 / TA 4).